An 843-amino-acid chain; its full sequence is Taste receptor type 1 member 2 (843 aa).

The first 19 residues, 1 to 19, serve as a signal peptide directing secretion; the sequence is MGPQARTLHLLFLLLHALP. The Extracellular segment spans residues 20 to 570; that stretch reads KPVMLVGNSD…AFLEWHEVPT (551 aa). N87, N296, N316, N355, N372, N432, N484, N491, and N531 each carry an N-linked (GlcNAc...) asparagine glycan. A helical membrane pass occupies residues 571-591; the sequence is IVVTILAALGFISTLAILLIF. Topologically, residues 592 to 606 are cytoplasmic; the sequence is WRHFQTPMVRSAGGP. The chain crosses the membrane as a helical span at residues 607–627; it reads MCFLMLVPLLLAFGMVPVYVG. The Extracellular segment spans residues 628 to 642; the sequence is PPTVFSCFCRQAFFT. Residues 643–663 form a helical membrane-spanning segment; that stretch reads VCFSVCLSCITVRSFQIVCVF. Over 664–682 the chain is Cytoplasmic; that stretch reads KMARRLPSAYGFWMRYHGP. A helical membrane pass occupies residues 683 to 703; sequence YVFVAFITAVKVALVAGNMLA. Residues 704-731 lie on the Extracellular side of the membrane; it reads TTINPIGRTDPDDPNIIILSCHPNYRNG. The chain crosses the membrane as a helical span at residues 732–752; that stretch reads LLFNTSMDLLLSVLGFSFAYV. Residues 753–764 lie on the Cytoplasmic side of the membrane; that stretch reads GKELPTNYNEAK. The chain crosses the membrane as a helical span at residues 765–785; sequence FITLSMTFSFTSSISLCTFMS. Over 786-789 the chain is Extracellular; it reads VHDG. A helical membrane pass occupies residues 790-810; that stretch reads VLVTIMDLLVTVLNFLAIGLG. Residues 811–843 lie on the Cytoplasmic side of the membrane; that stretch reads YFGPKCYMILFYPERNTSAYFNSMIQGYTMRKS.

It belongs to the G-protein coupled receptor 3 family. TAS1R subfamily. Forms heterodimers with TAS1R3. As to expression, expressed mainly in circumvallate and foliate taste papillae.

It is found in the cell membrane. Putative taste receptor. TAS1R2/TAS1R3 recognizes diverse natural and synthetic sweeteners. The polypeptide is Taste receptor type 1 member 2 (Tas1r2) (Mus musculus (Mouse)).